An 83-amino-acid chain; its full sequence is MGQIQYSDKYFDDTFEYRHVVLPPEVAKLLPKNRILSESEWRAIGVQQSRGWVHYAIHRPEPHIMLFRRPLNYQQEHQAQIAK.

Belongs to the CKS family. Interacts with CDKA-1, CYCD2-1 and AT4G14310.

In terms of biological role, binds to the catalytic subunit of the cyclin dependent kinases and is essential for their biological function. The chain is Cyclin-dependent kinases regulatory subunit 2 (CKS2) from Arabidopsis thaliana (Mouse-ear cress).